A 624-amino-acid chain; its full sequence is Low affinity potassium transport system protein Kup (624 aa).

12 helical membrane passes run 9 to 29, 49 to 69, 103 to 123, 137 to 157, 165 to 185, 213 to 233, 247 to 267, 276 to 296, 337 to 357, 365 to 385, 398 to 418, and 421 to 441; these read LPAI…TSPL, VFGF…IKYL, VIMG…TPAI, PQLD…LFMI, VGKL…GLGL, VSFI…ALYA, WFTV…ALLL, PFFL…AALA, IYIP…IVIV, LAAA…ILST, FVAL…TANL, and LLSG…VMTT.

The protein belongs to the HAK/KUP transporter (TC 2.A.72) family.

It is found in the cell inner membrane. It catalyses the reaction K(+)(in) + H(+)(in) = K(+)(out) + H(+)(out). Responsible for the low-affinity transport of potassium into the cell. Likely operates as a K(+):H(+) symporter. In Shigella dysenteriae serotype 1 (strain Sd197), this protein is Low affinity potassium transport system protein Kup.